The sequence spans 267 residues: Myb-related protein Hv1 (267 aa).

HTH myb-type domains are found at residues 9–61 (KAHT…INYL) and 62–116 (RPDL…RRKL). 2 DNA-binding regions (H-T-H motif) span residues 37–61 (WRSL…INYL) and 89–112 (WSLI…NTHI).

Germinating seed and apical meristem of shoot and root.

The protein resides in the nucleus. Possible transcription activator in response to an external signal. May be involved in the regulation of flavonoid biosynthesis. In Hordeum vulgare (Barley), this protein is Myb-related protein Hv1 (MYB1).